Here is a 140-residue protein sequence, read N- to C-terminus: Nucleoside diphosphate kinase (140 aa).

Residues Lys11, Phe59, Arg87, Thr93, Arg104, and Asn114 each coordinate ATP. The Pros-phosphohistidine intermediate role is filled by His117.

It belongs to the NDK family. Homotetramer. It depends on Mg(2+) as a cofactor.

The protein localises to the cytoplasm. The enzyme catalyses a 2'-deoxyribonucleoside 5'-diphosphate + ATP = a 2'-deoxyribonucleoside 5'-triphosphate + ADP. The catalysed reaction is a ribonucleoside 5'-diphosphate + ATP = a ribonucleoside 5'-triphosphate + ADP. Major role in the synthesis of nucleoside triphosphates other than ATP. The ATP gamma phosphate is transferred to the NDP beta phosphate via a ping-pong mechanism, using a phosphorylated active-site intermediate. The protein is Nucleoside diphosphate kinase of Rickettsia akari (strain Hartford).